Consider the following 577-residue polypeptide: Isocitrate dehydrogenase kinase/phosphatase (577 aa).

ATP-binding positions include 318-324 and K339; that span reads APGVRGM. The active site involves D374.

The protein belongs to the AceK family.

It localises to the cytoplasm. The catalysed reaction is L-seryl-[isocitrate dehydrogenase] + ATP = O-phospho-L-seryl-[isocitrate dehydrogenase] + ADP + H(+). In terms of biological role, bifunctional enzyme which can phosphorylate or dephosphorylate isocitrate dehydrogenase (IDH) on a specific serine residue. This is a regulatory mechanism which enables bacteria to bypass the Krebs cycle via the glyoxylate shunt in response to the source of carbon. When bacteria are grown on glucose, IDH is fully active and unphosphorylated, but when grown on acetate or ethanol, the activity of IDH declines drastically concomitant with its phosphorylation. This is Isocitrate dehydrogenase kinase/phosphatase from Pseudomonas aeruginosa (strain LESB58).